A 51-amino-acid chain; its full sequence is Otoconin-90 (51 aa).

It belongs to the phospholipase A2 family. In terms of assembly, interacts with OTOL1.

The protein localises to the secreted. Its function is as follows. Major protein of the otoconia, a calcium carbonate structure in the saccule and utricle of the ear. Together with OTOL1, acts as a scaffold for otoconia biomineralization: sequesters calcium and forms interconnecting fibrils between otoconia that are incorporated into the calcium crystal structure. Together with OTOL1, modulates calcite crystal morphology and growth kinetics. It is unlikely that this protein has phospholipase A2 activity. This Cavia porcellus (Guinea pig) protein is Otoconin-90 (OC90).